A 189-amino-acid chain; its full sequence is Selenoprotein S (189 aa).

The chain crosses the membrane as a helical span at residues 28–48 (SLLATYGWYIVFSCILLYVVF). The tract at residues 78-90 (RQEALAAARLKMQ) is VCP/p97-interacting motif (VIM). A disordered region spans residues 115-189 (KIEMWDSMQE…RRGPSSGGUG (75 aa)). Serine 140 carries the post-translational modification Phosphoserine. Residues 159-173 (RGGGYNPLSGEGGGA) show a composition bias toward gly residues. Position 188 (selenocysteine 188) is a non-standard amino acid, selenocysteine.

The protein belongs to the selenoprotein S family. Interacts with DERL1 and (via VIM motif) with VCP, suggesting that it forms a membrane complex with DERL1 that serves as a receptor for VCP. Also interacts with DERL2, DERL3 and SELENOK. The SELENOK-SELENOS complex interacts with VCP. Interacts with CCDC47. In terms of processing, truncated SELENOS proteins produced by failed UGA/Sec decoding are ubiquitinated by the CRL2(KLHDC2) and CRL2(KLHDC3) complexes, which recognizes the glycine (Gly) at the C-terminus of truncated SELENOS proteins. Truncated SELENOS proteins produced by failed UGA/Sec decoding are also ubiquitinated by the CRL5(KLHDC1) complex.

It localises to the endoplasmic reticulum membrane. The protein resides in the cytoplasm. In terms of biological role, involved in the degradation process of misfolded endoplasmic reticulum (ER) luminal proteins. Participates in the transfer of misfolded proteins from the ER to the cytosol, where they are destroyed by the proteasome in a ubiquitin-dependent manner. Probably acts by serving as a linker between DERL1, which mediates the retrotranslocation of misfolded proteins into the cytosol, and the ATPase complex VCP, which mediates the translocation and ubiquitination. This is Selenoprotein S from Homo sapiens (Human).